Here is a 253-residue protein sequence, read N- to C-terminus: Ferritin-2, chloroplastic (253 aa).

A chloroplast-targeting transit peptide spans 1-45 (MLHKASPALSLLSSGYTGGGNLFPPSRNSSNLLFSPSGSRFSVQA). The extension peptide (EP) stretch occupies residues 46–82 (AKGTNTKSLTGVVFEPFEEVKKEMELVPTTPFVSLAR). A Ferritin-like diiron domain is found at 83–236 (HKFSDDSESA…EYVAQLRRIG (154 aa)). Fe cation-binding residues include E100, E135, H138, E184, and Q218.

The protein belongs to the ferritin family. In terms of assembly, oligomer of 24 subunits. There are two types of subunits: L (light) chain and H (heavy) chain. The major chain can be light or heavy, depending on the species and tissue type. The functional molecule forms a roughly spherical shell with a diameter of 12 nm and contains a central cavity into which the insoluble mineral iron core is deposited.

It localises to the plastid. The protein localises to the chloroplast. It catalyses the reaction 4 Fe(2+) + O2 + 4 H(+) = 4 Fe(3+) + 2 H2O. Its function is as follows. Stores iron in a soluble, non-toxic, readily available form. Important for iron homeostasis. Has ferroxidase activity. Iron is taken up in the ferrous form and deposited as ferric hydroxides after oxidation. The sequence is that of Ferritin-2, chloroplastic (FER2) from Arabidopsis thaliana (Mouse-ear cress).